The chain runs to 306 residues: ATP phosphoribosyltransferase (306 aa).

This sequence belongs to the ATP phosphoribosyltransferase family.

The protein resides in the cytoplasm. It catalyses the reaction 1-(5-phospho-beta-D-ribosyl)-ATP + diphosphate = 5-phospho-alpha-D-ribose 1-diphosphate + ATP. Its pathway is amino-acid biosynthesis; L-histidine biosynthesis; L-histidine from 5-phospho-alpha-D-ribose 1-diphosphate: step 1/9. Catalyzes the condensation of ATP and 5-phosphoribose 1-diphosphate to form N'-(5'-phosphoribosyl)-ATP (PR-ATP). Has a crucial role in the pathway because the rate of histidine biosynthesis seems to be controlled primarily by regulation of the enzymatic activity. This is ATP phosphoribosyltransferase (HIS1) from Candida glabrata (strain ATCC 2001 / BCRC 20586 / JCM 3761 / NBRC 0622 / NRRL Y-65 / CBS 138) (Yeast).